Consider the following 241-residue polypeptide: Cobalt transport protein CbiM (241 aa).

The first 24 residues, 1-24 (MKKIKIISFSVAYLILLTPIYASA), serve as a signal peptide directing secretion. Helical transmembrane passes span 30-50 (GFLP…FIVG), 67-87 (LLLG…LPSV), 99-119 (LGTI…VLIF), 131-151 (TLGA…YFIF), 160-180 (SLAV…VTSL), and 202-222 (GIFA…TLIV).

This sequence belongs to the CbiM family. In terms of assembly, forms an energy-coupling factor (ECF) transporter complex composed of an ATP-binding protein (A component, CbiO), a transmembrane protein (T component, CbiQ) and 2 possible substrate-capture proteins (S components, CbiM and CbiN) of unknown stoichimetry.

Its subcellular location is the cell membrane. Its pathway is cofactor biosynthesis; adenosylcobalamin biosynthesis. Functionally, part of the energy-coupling factor (ECF) transporter complex CbiMNOQ involved in cobalt import. The polypeptide is Cobalt transport protein CbiM (Acetoanaerobium sticklandii (strain ATCC 12662 / DSM 519 / JCM 1433 / CCUG 9281 / NCIMB 10654 / HF) (Clostridium sticklandii)).